We begin with the raw amino-acid sequence, 66 residues long: Large ribosomal subunit protein uL29 (66 aa).

This sequence belongs to the universal ribosomal protein uL29 family.

In Allorhizobium ampelinum (strain ATCC BAA-846 / DSM 112012 / S4) (Agrobacterium vitis (strain S4)), this protein is Large ribosomal subunit protein uL29.